The following is a 168-amino-acid chain: Photosystem I assembly protein Ycf3 (168 aa).

TPR repeat units follow at residues 29–62 (AFSY…EEDP), 66–99 (SYTL…NANL), and 117–150 (AQSL…APDN).

The protein belongs to the Ycf3 family.

Its subcellular location is the plastid. The protein localises to the chloroplast thylakoid membrane. Essential for the assembly of the photosystem I (PSI) complex. May act as a chaperone-like factor to guide the assembly of the PSI subunits. The polypeptide is Photosystem I assembly protein Ycf3 (Phaeodactylum tricornutum (strain CCAP 1055/1)).